Consider the following 364-residue polypeptide: tRNA N6-adenosine threonylcarbamoyltransferase (364 aa).

2 residues coordinate Fe cation: His115 and His119. Substrate is bound by residues 137–141 (LVSGG), Asp170, Gly183, and Asn288. Asp316 contacts Fe cation. Residues 341–364 (PRSRWPLDEKSAPLIGTGRRGTKA) form a disordered region.

Belongs to the KAE1 / TsaD family. Fe(2+) serves as cofactor.

The protein resides in the cytoplasm. It catalyses the reaction L-threonylcarbamoyladenylate + adenosine(37) in tRNA = N(6)-L-threonylcarbamoyladenosine(37) in tRNA + AMP + H(+). In terms of biological role, required for the formation of a threonylcarbamoyl group on adenosine at position 37 (t(6)A37) in tRNAs that read codons beginning with adenine. Is involved in the transfer of the threonylcarbamoyl moiety of threonylcarbamoyl-AMP (TC-AMP) to the N6 group of A37, together with TsaE and TsaB. TsaD likely plays a direct catalytic role in this reaction. The chain is tRNA N6-adenosine threonylcarbamoyltransferase from Bartonella henselae (strain ATCC 49882 / DSM 28221 / CCUG 30454 / Houston 1) (Rochalimaea henselae).